The sequence spans 308 residues: 2-dehydro-3-deoxy-phosphogluconate/2-dehydro-3-deoxy-6-phosphogalactonate aldolase (308 aa).

Residues 57–58, 144–146, and 169–171 contribute to the substrate site; these read TT, YNY, and KDT. The Schiff-base intermediate with substrate role is filled by Lys169.

It belongs to the DapA family. KDPG aldolase subfamily. As to quaternary structure, homotetramer; dimer of dimers.

The catalysed reaction is 2-dehydro-3-deoxy-6-phospho-D-gluconate = D-glyceraldehyde 3-phosphate + pyruvate. The enzyme catalyses 2-dehydro-3-deoxy-6-phospho-D-galactonate = D-glyceraldehyde 3-phosphate + pyruvate. The protein operates within carbohydrate acid metabolism; 2-dehydro-3-deoxy-D-gluconate degradation; D-glyceraldehyde 3-phosphate and pyruvate from 2-dehydro-3-deoxy-D-gluconate: step 2/2. In terms of biological role, involved in the degradation of glucose and galactose via the Entner-Doudoroff pathway. Catalyzes the reversible cleavage of 2-keto-3-deoxy-6-phosphogluconate (KDPG) and 2-keto-3-deoxygluconate (KDG) forming pyruvate and glyceraldehyde 3-phosphate or glyceraldehyde, respectively. It is also able to catalyze the reversible cleavage of 2-keto-3-deoxy-6-phosphogalactonate (KDPGal) and 2-keto-3-deoxygalactonate (KDGal). This Saccharolobus solfataricus (strain ATCC 35092 / DSM 1617 / JCM 11322 / P2) (Sulfolobus solfataricus) protein is 2-dehydro-3-deoxy-phosphogluconate/2-dehydro-3-deoxy-6-phosphogalactonate aldolase (eda).